A 252-amino-acid chain; its full sequence is Triosephosphate isomerase (252 aa).

9 to 11 (NWK) contacts substrate. Histidine 95 acts as the Electrophile in catalysis. The Proton acceptor role is filled by glutamate 167. Substrate-binding positions include glycine 173, serine 213, and 234 to 235 (GG).

The protein belongs to the triosephosphate isomerase family. Homodimer.

It localises to the cytoplasm. The enzyme catalyses D-glyceraldehyde 3-phosphate = dihydroxyacetone phosphate. Its pathway is carbohydrate biosynthesis; gluconeogenesis. It functions in the pathway carbohydrate degradation; glycolysis; D-glyceraldehyde 3-phosphate from glycerone phosphate: step 1/1. Its function is as follows. Involved in the gluconeogenesis. Catalyzes stereospecifically the conversion of dihydroxyacetone phosphate (DHAP) to D-glyceraldehyde-3-phosphate (G3P). In Syntrophotalea carbinolica (strain DSM 2380 / NBRC 103641 / GraBd1) (Pelobacter carbinolicus), this protein is Triosephosphate isomerase.